Consider the following 363-residue polypeptide: D-proline dehydrogenase (363 aa).

Valine 3 to tyrosine 17 is an FAD binding site.

This sequence belongs to the DadA oxidoreductase family. As to quaternary structure, homotetramer. Requires FAD as cofactor.

The protein localises to the cell membrane. It carries out the reaction D-proline + A = 1-pyrroline-2-carboxylate + AH2. In terms of biological role, catalyzes the dehydrogenation of D-proline. Can also use other D-amino acids, but with lower efficiency. This Pyrobaculum islandicum (strain DSM 4184 / JCM 9189 / GEO3) protein is D-proline dehydrogenase (dpdh).